The primary structure comprises 284 residues: BES1/BZR1 homolog protein 3 (284 aa).

Disordered regions lie at residues 1-21 (MTSG…RRER) and 85-116 (GSTS…PSPT). Residues 6–88 (RTPTWKEREN…RMDLMNGSTS (83 aa)) are required for DNA-binding. Residues 85 to 97 (GSTSASPCSSYQH) show a composition bias toward polar residues. Low complexity predominate over residues 98-114 (SPRASYNPSPSSSSFPS). A Phosphothreonine modification is found at Thr-153.

This sequence belongs to the BZR/LAT61 family. Post-translationally, phosphorylated. Phosphorylation increases protein degradation.

This is BES1/BZR1 homolog protein 3 (BEH3) from Arabidopsis thaliana (Mouse-ear cress).